Reading from the N-terminus, the 398-residue chain is NADH-quinone oxidoreductase subunit D (398 aa).

The protein belongs to the complex I 49 kDa subunit family. In terms of assembly, NDH-1 is composed of 14 different subunits. Subunits NuoB, C, D, E, F, and G constitute the peripheral sector of the complex.

Its subcellular location is the cell inner membrane. It catalyses the reaction a quinone + NADH + 5 H(+)(in) = a quinol + NAD(+) + 4 H(+)(out). Functionally, NDH-1 shuttles electrons from NADH, via FMN and iron-sulfur (Fe-S) centers, to quinones in the respiratory chain. The immediate electron acceptor for the enzyme in this species is believed to be ubiquinone. Couples the redox reaction to proton translocation (for every two electrons transferred, four hydrogen ions are translocated across the cytoplasmic membrane), and thus conserves the redox energy in a proton gradient. The polypeptide is NADH-quinone oxidoreductase subunit D (Caulobacter vibrioides (strain ATCC 19089 / CIP 103742 / CB 15) (Caulobacter crescentus)).